The sequence spans 71 residues: Pro-glucagon (71 aa).

This sequence belongs to the glucagon family.

The protein localises to the secreted. Plays a key role in glucose metabolism and homeostasis. Regulates blood glucose by increasing gluconeogenesis and decreasing glycolysis. The sequence is that of Pro-glucagon (gcg) from Piaractus mesopotamicus (Small-scaled pacu).